Here is a 124-residue protein sequence, read N- to C-terminus: Protein MGF 110-5L (124 aa).

The signal sequence occupies residues 1–28 (MLVIILGVIGLLANQVLGLPTQAGGHLR).

It belongs to the asfivirus MGF 110 family.

In terms of biological role, plays a role in virus cell tropism, and may be required for efficient virus replication in macrophages. The chain is Protein MGF 110-5L from Ornithodoros (relapsing fever ticks).